Here is a 509-residue protein sequence, read N- to C-terminus: Probable cytochrome P450 519B1 (509 aa).

The chain crosses the membrane as a helical span at residues M1–R21. Residue C456 participates in heme binding.

The protein belongs to the cytochrome P450 family. The cofactor is heme.

It localises to the membrane. The chain is Probable cytochrome P450 519B1 (cyp519B1) from Dictyostelium discoideum (Social amoeba).